The chain runs to 223 residues: MKRVALLAVGSFNPPTIAHLRMLEVARSHLETINTQVVEGIMSPVADSYNNKPTLIKSNFRIQMVRAATKSSDWIRADDWECTRTTWTRTIDVLRHHRELVQEKFGSDVGMMLVVGGDVVDSFTRILPDGSNLWNSSDIRTIITEFGLIVLSREGSNPLNTIQSMPAISEFCDRIIQVKDEVCPSGVSSTRLRAAIMNKKSIKYSTPDEVINFIRENNLYQKI.

2 residues coordinate NAD(+): Ser11 and Phe12. His19 provides a ligand contact to ATP. 7 residues coordinate NAD(+): Trp87, Thr90, Gly116, Asp118, Leu133, Trp134, and Arg153. Position 190-191 (190-191 (TR)) interacts with ATP.

The protein belongs to the eukaryotic NMN adenylyltransferase family. It depends on a divalent metal cation as a cofactor.

It carries out the reaction beta-nicotinamide D-ribonucleotide + ATP + H(+) = diphosphate + NAD(+). It catalyses the reaction nicotinate beta-D-ribonucleotide + ATP + H(+) = deamido-NAD(+) + diphosphate. The protein operates within cofactor biosynthesis; NAD(+) biosynthesis; deamido-NAD(+) from nicotinate D-ribonucleotide: step 1/1. It functions in the pathway cofactor biosynthesis; NAD(+) biosynthesis; NAD(+) from nicotinamide D-ribonucleotide: step 1/1. Its function is as follows. Catalyzes the formation of NAD(+) from nicotinamide mononucleotide (NMN) and ATP. Can also use the deamidated form; nicotinic acid mononucleotide (NaMN) as substrate. The protein is Nicotinamide/nicotinic acid mononucleotide adenylyltransferase 2 of Caenorhabditis elegans.